The primary structure comprises 241 residues: Uridylate kinase (241 aa).

An ATP-binding site is contributed by 12–15; the sequence is KLSG. The segment at 20–25 is involved in allosteric activation by GTP; that stretch reads GDKGQG. G54 contacts UMP. ATP is bound by residues G55 and R59. UMP-binding positions include D74 and 135–142; that span reads TGSPYFST. ATP contacts are provided by N163, Y169, and D172.

It belongs to the UMP kinase family. In terms of assembly, homohexamer.

It localises to the cytoplasm. It carries out the reaction UMP + ATP = UDP + ADP. It functions in the pathway pyrimidine metabolism; CTP biosynthesis via de novo pathway; UDP from UMP (UMPK route): step 1/1. Its activity is regulated as follows. Allosterically activated by GTP. Inhibited by UTP. In terms of biological role, catalyzes the reversible phosphorylation of UMP to UDP. The sequence is that of Uridylate kinase from Leuconostoc mesenteroides subsp. mesenteroides (strain ATCC 8293 / DSM 20343 / BCRC 11652 / CCM 1803 / JCM 6124 / NCDO 523 / NBRC 100496 / NCIMB 8023 / NCTC 12954 / NRRL B-1118 / 37Y).